A 692-amino-acid chain; its full sequence is Elongation factor G (692 aa).

In terms of domain architecture, tr-type G spans 8 to 282 (ENTRNIGIMA…GVVDYLPSPL (275 aa)). Residues 17 to 24 (AHIDAGKT), 81 to 85 (DTPGH), and 135 to 138 (NKMD) each bind GTP.

This sequence belongs to the TRAFAC class translation factor GTPase superfamily. Classic translation factor GTPase family. EF-G/EF-2 subfamily.

It is found in the cytoplasm. In terms of biological role, catalyzes the GTP-dependent ribosomal translocation step during translation elongation. During this step, the ribosome changes from the pre-translocational (PRE) to the post-translocational (POST) state as the newly formed A-site-bound peptidyl-tRNA and P-site-bound deacylated tRNA move to the P and E sites, respectively. Catalyzes the coordinated movement of the two tRNA molecules, the mRNA and conformational changes in the ribosome. The polypeptide is Elongation factor G (Geobacillus thermodenitrificans (strain NG80-2)).